We begin with the raw amino-acid sequence, 238 residues long: Octanoyltransferase (238 aa).

Residues 40 to 220 (AGGSDALLLL…RVCDALDGRL (181 aa)) form the BPL/LPL catalytic domain. Substrate is bound by residues 78 to 85 (RGGKITWH), 150 to 152 (AIG), and 163 to 165 (GFA). The active-site Acyl-thioester intermediate is the Cys181.

The protein belongs to the LipB family.

It is found in the cytoplasm. The enzyme catalyses octanoyl-[ACP] + L-lysyl-[protein] = N(6)-octanoyl-L-lysyl-[protein] + holo-[ACP] + H(+). It functions in the pathway protein modification; protein lipoylation via endogenous pathway; protein N(6)-(lipoyl)lysine from octanoyl-[acyl-carrier-protein]: step 1/2. In terms of biological role, catalyzes the transfer of endogenously produced octanoic acid from octanoyl-acyl-carrier-protein onto the lipoyl domains of lipoate-dependent enzymes. Lipoyl-ACP can also act as a substrate although octanoyl-ACP is likely to be the physiological substrate. The chain is Octanoyltransferase from Mycobacterium sp. (strain JLS).